The sequence spans 1415 residues: DNA-directed RNA polymerase subunit beta' (1415 aa).

Zn(2+) contacts are provided by Cys70, Cys72, Cys85, and Cys88. Asp461, Asp463, and Asp465 together coordinate Mg(2+). Zn(2+) is bound by residues Cys820, Cys894, Cys901, and Cys904. The interval 1382 to 1415 is disordered; that stretch reads ERERAQAIADEEQSLFIEPPPVVQATTEGEGDNA.

This sequence belongs to the RNA polymerase beta' chain family. The RNAP catalytic core consists of 2 alpha, 1 beta, 1 beta' and 1 omega subunit. When a sigma factor is associated with the core the holoenzyme is formed, which can initiate transcription. Requires Mg(2+) as cofactor. The cofactor is Zn(2+).

The enzyme catalyses RNA(n) + a ribonucleoside 5'-triphosphate = RNA(n+1) + diphosphate. Its function is as follows. DNA-dependent RNA polymerase catalyzes the transcription of DNA into RNA using the four ribonucleoside triphosphates as substrates. The polypeptide is DNA-directed RNA polymerase subunit beta' (Cupriavidus pinatubonensis (strain JMP 134 / LMG 1197) (Cupriavidus necator (strain JMP 134))).